Here is a 103-residue protein sequence, read N- to C-terminus: Small ribosomal subunit protein bS18c (103 aa).

It belongs to the bacterial ribosomal protein bS18 family. As to quaternary structure, part of the 30S ribosomal subunit.

It is found in the plastid. The protein resides in the chloroplast. The protein is Small ribosomal subunit protein bS18c of Buxus microphylla (Littleleaf boxwood).